We begin with the raw amino-acid sequence, 555 residues long: Glutamine--tRNA ligase (555 aa).

Positions 34–44 (PEPNGYLHIGH) match the 'HIGH' region motif. ATP-binding positions include 35–37 (EPN) and 41–47 (HIGHAKS). Positions 67 and 212 each coordinate L-glutamine. Residues Thr231, 261–262 (RL), and 269–271 (MSK) each bind ATP. The short motif at 268 to 272 (VMSKR) is the 'KMSKS' region element. The tract at residues 317 to 324 (TKQDNTIE) is interaction with tRNA.

It belongs to the class-I aminoacyl-tRNA synthetase family. Monomer.

It is found in the cytoplasm. The enzyme catalyses tRNA(Gln) + L-glutamine + ATP = L-glutaminyl-tRNA(Gln) + AMP + diphosphate. This is Glutamine--tRNA ligase from Enterobacter sp. (strain 638).